Reading from the N-terminus, the 281-residue chain is ATP synthase subunit a (281 aa).

6 helical membrane passes run 50–70, 116–136, 145–165, 172–192, 219–239, and 246–266; these read FSFT…LLLV, FFPC…QGMI, HFLI…IVGF, FLSF…LVLL, VKIL…FYFI, and FIVL…AYVF.

This sequence belongs to the ATPase A chain family. As to quaternary structure, F-type ATPases have 2 components, CF(1) - the catalytic core - and CF(0) - the membrane proton channel. CF(1) has five subunits: alpha(3), beta(3), gamma(1), delta(1), epsilon(1). CF(0) has three main subunits: a, b and c.

It is found in the mitochondrion inner membrane. In terms of biological role, mitochondrial membrane ATP synthase (F(1)F(0) ATP synthase or Complex V) produces ATP from ADP in the presence of a proton gradient across the membrane which is generated by electron transport complexes of the respiratory chain. F-type ATPases consist of two structural domains, F(1) - containing the extramembraneous catalytic core and F(0) - containing the membrane proton channel, linked together by a central stalk and a peripheral stalk. During catalysis, ATP synthesis in the catalytic domain of F(1) is coupled via a rotary mechanism of the central stalk subunits to proton translocation. Key component of the proton channel; it may play a direct role in the translocation of protons across the membrane. The protein is ATP synthase subunit a (ATP6) of Oenothera berteroana (Bertero's evening primrose).